The sequence spans 308 residues: Olfactory receptor 8D1 (308 aa).

Topologically, residues 1–25 (MTMENYSMAAQFVLDGLTQQAELQL) are extracellular. Asn-5 is a glycosylation site (N-linked (GlcNAc...) asparagine). The chain crosses the membrane as a helical span at residues 26–46 (PLFLLFLGIYVVTVVGNLGMI). Residues 47–54 (LLIAVSPL) lie on the Cytoplasmic side of the membrane. The chain crosses the membrane as a helical span at residues 55 to 75 (LHTPMYYFLSSLSFVDFCYSS). Residues 76–99 (VITPKMLVNFLGKKNTILYSECMV) lie on the Extracellular side of the membrane. Cys-97 and Cys-189 are disulfide-bonded. The chain crosses the membrane as a helical span at residues 100–120 (QLFFFVVFVVAEGYLLTAMAY). The Cytoplasmic portion of the chain corresponds to 121–139 (DRYVAICSPLLYNAIMSSW). Residues 140 to 160 (VCSLLVLAAFFLGFLSALTHT) traverse the membrane as a helical segment. The Extracellular segment spans residues 161–197 (SAMMKLSFCKSHIINHYFCDVLPLLNLSCSNTHLNEL). Asn-186 carries an N-linked (GlcNAc...) asparagine glycan. Residues 198–217 (LLFIIAGFNTLVPTLAVAVS) traverse the membrane as a helical segment. The Cytoplasmic portion of the chain corresponds to 218 to 237 (YAFILYSILHIRSSEGRSKA). Residues 238 to 258 (FGTCSSHLMAVVIFFGSITFM) traverse the membrane as a helical segment. The Extracellular portion of the chain corresponds to 259 to 271 (YFKPPSSNSLDQE). A helical membrane pass occupies residues 272–292 (KVSSVFYTTVIPMLNPLIYSL). The Cytoplasmic segment spans residues 293–308 (RNKDVKKALRKVLVGK).

This sequence belongs to the G-protein coupled receptor 1 family. Expressed in the tongue.

It localises to the cell membrane. Its function is as follows. Odorant receptor (Potential). May be involved in taste perception. In Homo sapiens (Human), this protein is Olfactory receptor 8D1 (OR8D1).